The following is a 466-amino-acid chain: Ribulose bisphosphate carboxylase large chain (466 aa).

Position 4 is an N6,N6,N6-trimethyllysine (K4). Substrate contacts are provided by N113 and T163. K165 functions as the Proton acceptor in the catalytic mechanism. K167 is a binding site for substrate. Mg(2+)-binding residues include K191, D193, and E194. K191 carries the N6-carboxylysine modification. The Proton acceptor role is filled by H284. Residues R285, H317, and S369 each contribute to the substrate site.

The protein belongs to the RuBisCO large chain family. Type I subfamily. As to quaternary structure, heterohexadecamer of 8 large chains and 8 small chains; disulfide-linked. The disulfide link is formed within the large subunit homodimers. Mg(2+) serves as cofactor. Post-translationally, the disulfide bond which can form in the large chain dimeric partners within the hexadecamer appears to be associated with oxidative stress and protein turnover.

The protein localises to the plastid. Its subcellular location is the chloroplast. The enzyme catalyses 2 (2R)-3-phosphoglycerate + 2 H(+) = D-ribulose 1,5-bisphosphate + CO2 + H2O. The catalysed reaction is D-ribulose 1,5-bisphosphate + O2 = 2-phosphoglycolate + (2R)-3-phosphoglycerate + 2 H(+). Functionally, ruBisCO catalyzes two reactions: the carboxylation of D-ribulose 1,5-bisphosphate, the primary event in carbon dioxide fixation, as well as the oxidative fragmentation of the pentose substrate in the photorespiration process. Both reactions occur simultaneously and in competition at the same active site. The chain is Ribulose bisphosphate carboxylase large chain from Justicia odora (Water willow).